The sequence spans 841 residues: MLLCTARLVGLQLLISCCWAFACHSTESSPDFTLPGDYLLAGLFPLHSGCLQVRHRPEVTLCDRSCSFNEHGYHLFQAMRLGVEEINNSTALLPNITLGYQLYDVCSDSANVYATLRVLSLPGQHHIELQGDLLHYSPTVLAVIGPDSTNRAATTAALLSPFLVPMISYAASSETLSVKRQYPSFLRTIPNDKYQVETMVLLLQKFGWTWISLVGSSDDYGQLGVQALENQATGQGICIAFKDIMPFSAQVGDERMQCLMRHLAQAGATVVVVFSSRQLARVFFESVVLTNLTGKVWVASEAWALSRHITGVPGIQRIGMVLGVAIQKRAVPGLKAFEEAYARADKKAPRPCHKGSWCSSNQLCRECQAFMAHTMPKLKAFSMSSAYNAYRAVYAVAHGLHQLLGCASGACSRGRVYPWQLLEQIHKVHFLLHKDTVAFNDNRDPLSSYNIIAWDWNGPKWTFTVLGSSTWSPVQLNINETKIQWHGKDNQVPKSVCSSDCLEGHQRVVTGFHHCCFECVPCGAGTFLNKSDLYRCQPCGKEEWAPEGSQTCFPRTVVFLALREHTSWVLLAANTLLLLLLLGTAGLFAWHLDTPVVRSAGGRLCFLMLGSLAAGSGSLYGFFGEPTRPACLLRQALFALGFTIFLSCLTVRSFQLIIIFKFSTKVPTFYHAWVQNHGAGLFVMISSAAQLLICLTWLVVWTPLPAREYQRFPHLVMLECTETNSLGFILAFLYNGLLSISAFACSYLGKDLPENYNEAKCVTFSLLFNFVSWIAFFTTASVYDGKYLPAANMMAGLSSLSSGFGGYFLPKCYVILCRPDLNSTEHFQASIQDYTRRCGST.

The N-terminal stretch at 1–20 is a signal peptide; that stretch reads MLLCTARLVGLQLLISCCWA. Residues 21-567 lie on the Extracellular side of the membrane; the sequence is FACHSTESSP…VFLALREHTS (547 aa). N87, N88, N95, N291, N479, and N529 each carry an N-linked (GlcNAc...) asparagine glycan. The helical transmembrane segment at 568-588 threads the bilayer; the sequence is WVLLAANTLLLLLLLGTAGLF. The Cytoplasmic portion of the chain corresponds to 589–603; sequence AWHLDTPVVRSAGGR. Residues 604-624 form a helical membrane-spanning segment; that stretch reads LCFLMLGSLAAGSGSLYGFFG. The Extracellular segment spans residues 625–639; sequence EPTRPACLLRQALFA. A helical transmembrane segment spans residues 640-660; sequence LGFTIFLSCLTVRSFQLIIIF. Residues 661–680 are Cytoplasmic-facing; sequence KFSTKVPTFYHAWVQNHGAG. A helical transmembrane segment spans residues 681–701; the sequence is LFVMISSAAQLLICLTWLVVW. Residues 702 to 725 lie on the Extracellular side of the membrane; it reads TPLPAREYQRFPHLVMLECTETNS. The helical transmembrane segment at 726-746 threads the bilayer; that stretch reads LGFILAFLYNGLLSISAFACS. Over 747-761 the chain is Cytoplasmic; that stretch reads YLGKDLPENYNEAKC. Residues 762–782 traverse the membrane as a helical segment; the sequence is VTFSLLFNFVSWIAFFTTASV. The Extracellular segment spans residues 783 to 795; sequence YDGKYLPAANMMA. A helical membrane pass occupies residues 796–816; the sequence is GLSSLSSGFGGYFLPKCYVIL. Residues 817–841 lie on the Cytoplasmic side of the membrane; sequence CRPDLNSTEHFQASIQDYTRRCGST.

This sequence belongs to the G-protein coupled receptor 3 family. TAS1R subfamily. Forms heterodimers with TAS1R3.

It is found in the cell membrane. Functionally, putative taste receptor. TAS1R1/TAS1R3 responds to the umami taste stimulus (the taste of monosodium glutamate). Sequence differences within and between species can significantly influence the selectivity and specificity of taste responses. This is Taste receptor type 1 member 1 (TAS1R1) from Homo sapiens (Human).